The primary structure comprises 500 residues: Signal transduction histidine-protein kinase/phosphatase UhpB (500 aa).

The next 8 membrane-spanning stretches (helical) occupy residues 8-28 (LITVVACFFIFSAAWFCLWSI), 78-98 (VALAHLPLLMIGSVLTLLPVA), 112-132 (LLLQGAALTAAALLQSLPWLG), 140-160 (ALLLTLTGGLTLAPICLVFWH), 185-205 (HLIWYLLLFIVSLWLQLGLPA), 207-224 (LSRFTPFCLALPIIALAW), 231-249 (ALIATLMNAIALIASQTWH), and 253-273 (VDLLLSLLAQSLTGLLLGAGI). Over 274–500 (QRLRELNQSL…VSVSLPQRYV (227 aa)) the chain is Cytoplasmic. A Histidine kinase domain is found at 311 to 499 (ELHDDIGQTI…RVSVSLPQRY (189 aa)). H313 is subject to Phosphohistidine; by autocatalysis.

Post-translationally, autophosphorylated.

It is found in the cell inner membrane. The catalysed reaction is ATP + protein L-histidine = ADP + protein N-phospho-L-histidine.. Functionally, part of the UhpABC signaling cascade that controls the expression of the hexose phosphate transporter UhpT. UhpB functions as a membrane-associated protein kinase that autophosphorylates in response to interaction with UhpC, and subsequently transfers its phosphate group to the response regulator UhpA. Can also dephosphorylate UhpA. This chain is Signal transduction histidine-protein kinase/phosphatase UhpB (uhpB), found in Salmonella typhimurium (strain LT2 / SGSC1412 / ATCC 700720).